We begin with the raw amino-acid sequence, 203 residues long: Outer-membrane lipoprotein LolB (203 aa).

Residues Met1 to Ala20 form the signal peptide. Cys21 carries the N-palmitoyl cysteine lipid modification. A lipid anchor (S-diacylglycerol cysteine) is attached at Cys21.

It belongs to the LolB family. As to quaternary structure, monomer.

The protein localises to the cell outer membrane. In terms of biological role, plays a critical role in the incorporation of lipoproteins in the outer membrane after they are released by the LolA protein. The chain is Outer-membrane lipoprotein LolB from Cupriavidus taiwanensis (strain DSM 17343 / BCRC 17206 / CCUG 44338 / CIP 107171 / LMG 19424 / R1) (Ralstonia taiwanensis (strain LMG 19424)).